Reading from the N-terminus, the 32-residue chain is Phallacidin proprotein (32 aa).

Residues 1–10 (MSDINATRLP) constitute a propeptide that is removed on maturation. Residues 11 to 17 (AWLVDCP) constitute a cross-link (cyclopeptide (Ala-Pro)). The segment at residues 12–16 (WLVDC) is a cross-link (2'-cysteinyl-6'-hydroxytryptophan sulfoxide (Trp-Cys)). A propeptide spanning residues 18-32 (CVGDDINRLLTRGEK) is cleaved from the precursor.

Belongs to the MSDIN fungal toxin family. In terms of processing, processed by the macrocyclase-peptidase enzyme POPB to yield a toxic cyclic heptapeptide. POPB first removes 10 residues from the N-terminus. Conformational trapping of the remaining peptide forces the enzyme to release this intermediate rather than proceed to macrocyclization. The enzyme rebinds the remaining peptide in a different conformation and catalyzes macrocyclization of the N-terminal 7 residues.

Functionally, major toxin that belongs to the bicyclic heptapeptides called phallotoxins. Although structurally related to amatoxins, phallotoxins have a different mode of action, which is the stabilization of F-actin. Phallotoxins are poisonous when administered parenterally, but not orally because of poor absorption. In Amanita pallidorosea, this protein is Phallacidin proprotein.